We begin with the raw amino-acid sequence, 105 residues long: MNTLFGKTKEEAKPIVLKSVDEYPEAPISLGTTLVNPTGDWRTFKPVVNEEKCVKCYICWKYCPEPAIYIKPDGYVAIDYDYCKGCGICANECPTKAITMIKEEK.

2 consecutive 4Fe-4S ferredoxin-type domains span residues 44 to 73 and 74 to 103; these read FKPV…IKPD and GYVA…MIKE. Positions 53, 56, 59, 63, 83, 86, 89, and 93 each coordinate [4Fe-4S] cluster.

Heterotetramer of one alpha, one beta, one delta and one gamma chain. [4Fe-4S] cluster serves as cofactor.

It catalyses the reaction 3-methyl-2-oxobutanoate + 2 oxidized [2Fe-2S]-[ferredoxin] + CoA = 2-methylpropanoyl-CoA + 2 reduced [2Fe-2S]-[ferredoxin] + CO2 + H(+). This Pyrococcus furiosus (strain ATCC 43587 / DSM 3638 / JCM 8422 / Vc1) protein is Ketoisovalerate oxidoreductase subunit VorD (vorD).